Consider the following 190-residue polypeptide: Imidazoleglycerol-phosphate dehydratase (190 aa).

This sequence belongs to the imidazoleglycerol-phosphate dehydratase family.

The protein localises to the cytoplasm. The catalysed reaction is D-erythro-1-(imidazol-4-yl)glycerol 3-phosphate = 3-(imidazol-4-yl)-2-oxopropyl phosphate + H2O. It participates in amino-acid biosynthesis; L-histidine biosynthesis; L-histidine from 5-phospho-alpha-D-ribose 1-diphosphate: step 6/9. In Sulfurimonas denitrificans (strain ATCC 33889 / DSM 1251) (Thiomicrospira denitrificans (strain ATCC 33889 / DSM 1251)), this protein is Imidazoleglycerol-phosphate dehydratase.